The primary structure comprises 1193 residues: DNA-directed RNA polymerase subunit beta (1193 aa).

Over residues 1153–1162 the composition is skewed to acidic residues; sequence EMRDLEDDED. Residues 1153–1193 are disordered; the sequence is EMRDLEDDEDAKQNEGLSLPNDEESEELVSADAERDVVTKE. The segment covering 1184–1193 has biased composition (basic and acidic residues); that stretch reads DAERDVVTKE.

It belongs to the RNA polymerase beta chain family. The RNAP catalytic core consists of 2 alpha, 1 beta, 1 beta' and 1 omega subunit. When a sigma factor is associated with the core the holoenzyme is formed, which can initiate transcription.

The catalysed reaction is RNA(n) + a ribonucleoside 5'-triphosphate = RNA(n+1) + diphosphate. Its function is as follows. DNA-dependent RNA polymerase catalyzes the transcription of DNA into RNA using the four ribonucleoside triphosphates as substrates. This is DNA-directed RNA polymerase subunit beta from Bacillus licheniformis (strain ATCC 14580 / DSM 13 / JCM 2505 / CCUG 7422 / NBRC 12200 / NCIMB 9375 / NCTC 10341 / NRRL NRS-1264 / Gibson 46).